The primary structure comprises 294 residues: Cytidine deaminase (294 aa).

2 consecutive CMP/dCMP-type deaminase domains span residues 48–168 (DDDA…FGPT) and 187–294 (AETD…RVTF). 89-91 (NME) provides a ligand contact to substrate. H102 is a Zn(2+) binding site. E104 (proton donor) is an active-site residue. The Zn(2+) site is built by C129 and C132.

This sequence belongs to the cytidine and deoxycytidylate deaminase family. As to quaternary structure, homodimer. Zn(2+) is required as a cofactor.

It catalyses the reaction cytidine + H2O + H(+) = uridine + NH4(+). The catalysed reaction is 2'-deoxycytidine + H2O + H(+) = 2'-deoxyuridine + NH4(+). This enzyme scavenges exogenous and endogenous cytidine and 2'-deoxycytidine for UMP synthesis. The chain is Cytidine deaminase from Yersinia pseudotuberculosis serotype IB (strain PB1/+).